Reading from the N-terminus, the 62-residue chain is Toxin Tb2 (62 aa).

An LCN-type CS-alpha/beta domain is found at K1–C62. Intrachain disulfides connect C11–C62, C15–C38, C23–C43, and C27–C45. The residue at position 62 (C62) is a Cysteine amide.

It belongs to the long (4 C-C) scorpion toxin superfamily. Sodium channel inhibitor family. Beta subfamily. Expressed by the venom gland.

The protein resides in the secreted. In terms of biological role, beta toxins bind voltage-independently at site-4 of sodium channels (Nav) and shift the voltage of activation toward more negative potentials thereby affecting sodium channel activation and promoting spontaneous and repetitive firing. This toxin is active on mammals. This is Toxin Tb2 from Tityus bahiensis (Brazilian scorpion).